Reading from the N-terminus, the 444-residue chain is Homogentisate 1,2-dioxygenase (444 aa).

The Proton acceptor role is filled by His-298. Fe cation-binding residues include His-341 and Glu-347. Homogentisate-binding residues include Tyr-356 and His-377. His-377 provides a ligand contact to Fe cation.

This sequence belongs to the homogentisate dioxygenase family. Hexamer; dimer of trimers. The cofactor is Fe cation.

The enzyme catalyses homogentisate + O2 = 4-maleylacetoacetate + H(+). It functions in the pathway amino-acid degradation; L-phenylalanine degradation; acetoacetate and fumarate from L-phenylalanine: step 4/6. Its function is as follows. Involved in the catabolism of homogentisate (2,5-dihydroxyphenylacetate or 2,5-OH-PhAc), a central intermediate in the degradation of phenylalanine and tyrosine. Catalyzes the oxidative ring cleavage of the aromatic ring of homogentisate to yield maleylacetoacetate. In Burkholderia orbicola (strain AU 1054), this protein is Homogentisate 1,2-dioxygenase.